A 263-amino-acid polypeptide reads, in one-letter code: MISKTLQLSNNRTAHYFEQGEGEPLVLIHGVGMQAEAWYPQIEYFSKHYHVISLDMPGHGQSTALAADAQLQDFVDWAIECIHTLNLGPVNLAGHSMGSLITTGVSVTRPDLVKRMAVLNGVYKRTHAAREAVIQRAEALKQGHLDIETPLQRWFGQSEIEKIASERVKLWLENVNMSGYTTAYRAFAQGDLVYADGWSDIECPALVLTGTDDPNSTAEMTIQMAHQAKHGTAIVIENERHMVNLTAPEKVNQAMQAWLETTP.

Catalysis depends on Ser96, which acts as the Nucleophile. Active-site residues include Asn120 and His241.

It belongs to the AB hydrolase superfamily. In terms of assembly, monomer.

The enzyme catalyses (E)-2-((N-methylformamido) methylene)succinate + 2 H2O + H(+) = succinate semialdehyde + methylamine + formate + CO2. In terms of biological role, involved in the degradation of the pyridine ring of trigonelline (TG; N-methylnicotinate) into succinate and methylamine as carbon and nitrogen sources, respectively. Catalyzes the hydrolysis of (E)-2-((N-methylformamido)methylene)succinate (MFMS) into formic acid, succinate semialdehyde (SSA), methylamine and carbon dioxide. This Acinetobacter baylyi (strain ATCC 33305 / BD413 / ADP1) protein is (E)-2-((N-methylformamido)methylene)succinate hydrolase.